The chain runs to 248 residues: Cytochrome c oxidase subunit 2 (248 aa).

The Mitochondrial intermembrane portion of the chain corresponds to Met-1 to Asn-39. Residues Val-40–Tyr-56 traverse the membrane as a helical segment. Topologically, residues Asn-57–Ala-87 are mitochondrial matrix. Residues Val-88–Cys-104 traverse the membrane as a helical segment. Residues Asp-105–Gln-248 lie on the Mitochondrial intermembrane side of the membrane. Cu cation-binding residues include His-183, Cys-218, Glu-220, Cys-222, His-226, and Met-229. Glu-220 lines the Mg(2+) pocket.

This sequence belongs to the cytochrome c oxidase subunit 2 family. In terms of assembly, component of the cytochrome c oxidase (complex IV, CIV), a multisubunit enzyme composed of a catalytic core of 3 subunits and several supernumerary subunits. The complex exists as a monomer or a dimer and forms supercomplexes (SCs) in the inner mitochondrial membrane with ubiquinol-cytochrome c oxidoreductase (cytochrome b-c1 complex, complex III, CIII). The cofactor is Cu cation.

It is found in the mitochondrion inner membrane. It carries out the reaction 4 Fe(II)-[cytochrome c] + O2 + 8 H(+)(in) = 4 Fe(III)-[cytochrome c] + 2 H2O + 4 H(+)(out). In terms of biological role, component of the cytochrome c oxidase, the last enzyme in the mitochondrial electron transport chain which drives oxidative phosphorylation. The respiratory chain contains 3 multisubunit complexes succinate dehydrogenase (complex II, CII), ubiquinol-cytochrome c oxidoreductase (cytochrome b-c1 complex, complex III, CIII) and cytochrome c oxidase (complex IV, CIV), that cooperate to transfer electrons derived from NADH and succinate to molecular oxygen, creating an electrochemical gradient over the inner membrane that drives transmembrane transport and the ATP synthase. Cytochrome c oxidase is the component of the respiratory chain that catalyzes the reduction of oxygen to water. Electrons originating from reduced cytochrome c in the intermembrane space (IMS) are transferred via the dinuclear copper A center (CU(A)) of subunit 2 and heme A of subunit 1 to the active site in subunit 1, a binuclear center (BNC) formed by heme A3 and copper B (CU(B)). The BNC reduces molecular oxygen to 2 water molecules using 4 electrons from cytochrome c in the IMS and 4 protons from the mitochondrial matrix. The sequence is that of Cytochrome c oxidase subunit 2 (COX2) from Brettanomyces naardenensis (Yeast).